The following is a 220-amino-acid chain: Thiamine-phosphate synthase (220 aa).

4-amino-2-methyl-5-(diphosphooxymethyl)pyrimidine-binding positions include 38 to 42 (QYRDK) and Asn70. Mg(2+)-binding residues include Asp71 and Asp90. Thr109 is a binding site for 4-amino-2-methyl-5-(diphosphooxymethyl)pyrimidine. Position 135-137 (135-137 (TVS)) interacts with 2-[(2R,5Z)-2-carboxy-4-methylthiazol-5(2H)-ylidene]ethyl phosphate. Lys138 lines the 4-amino-2-methyl-5-(diphosphooxymethyl)pyrimidine pocket. 2-[(2R,5Z)-2-carboxy-4-methylthiazol-5(2H)-ylidene]ethyl phosphate is bound by residues Gly171 and 191–192 (IS).

This sequence belongs to the thiamine-phosphate synthase family. Mg(2+) serves as cofactor.

It carries out the reaction 2-[(2R,5Z)-2-carboxy-4-methylthiazol-5(2H)-ylidene]ethyl phosphate + 4-amino-2-methyl-5-(diphosphooxymethyl)pyrimidine + 2 H(+) = thiamine phosphate + CO2 + diphosphate. The enzyme catalyses 2-(2-carboxy-4-methylthiazol-5-yl)ethyl phosphate + 4-amino-2-methyl-5-(diphosphooxymethyl)pyrimidine + 2 H(+) = thiamine phosphate + CO2 + diphosphate. It catalyses the reaction 4-methyl-5-(2-phosphooxyethyl)-thiazole + 4-amino-2-methyl-5-(diphosphooxymethyl)pyrimidine + H(+) = thiamine phosphate + diphosphate. It participates in cofactor biosynthesis; thiamine diphosphate biosynthesis; thiamine phosphate from 4-amino-2-methyl-5-diphosphomethylpyrimidine and 4-methyl-5-(2-phosphoethyl)-thiazole: step 1/1. Functionally, condenses 4-methyl-5-(beta-hydroxyethyl)thiazole monophosphate (THZ-P) and 2-methyl-4-amino-5-hydroxymethyl pyrimidine pyrophosphate (HMP-PP) to form thiamine monophosphate (TMP). In Agrobacterium fabrum (strain C58 / ATCC 33970) (Agrobacterium tumefaciens (strain C58)), this protein is Thiamine-phosphate synthase.